Consider the following 182-residue polypeptide: Thioredoxin F-type, chloroplastic (182 aa).

A disordered region spans residues 1-22 (MPLSLRLAPSPTALSPTTGGFS). The region spanning 52–177 (KRGDSSVVRC…LVAAIETARS (126 aa)) is the Thioredoxin domain. Residues C102 and C105 each act as nucleophile in the active site. C102 and C105 are disulfide-bonded.

It belongs to the thioredoxin family. Plant F-type subfamily. Forms a complex with heterodimeric ferredoxin-thioredoxin reductase (FTR) and ferredoxin.

Its subcellular location is the plastid. The protein resides in the chloroplast. Participates in various redox reactions through the reversible oxidation of the active center dithiol to a disulfide. The F form is known to activate a number of enzymes of the photosynthetic carbon cycle. The polypeptide is Thioredoxin F-type, chloroplastic (TRXF) (Brassica napus (Rape)).